The chain runs to 390 residues: MSGLCFNPFRLRWSLRSKLPLEPSLPNLPCNPSSSKTNRYAEAETMEKKRFDSMESWSMILESENVETWEASKGEREEWTADLSQLFIGNKFASGAHSRIYRGIYKQRAVAVKMVRIPTHKEETRAKLEQQFKSEVALLSRLFHPNIVQFIAACKKPPVYCIITEYMSQGNLRMYLNKKEPYSLSIETVLRLALDISRGMEYLHSQGVIHRDLKSNNLLLNDEMRVKVADFGTSCLETQCREAKGNMGTYRWMAPEMIKEKPYTRKVDVYSFGIVLWELTTALLPFQGMTPVQAAFAVAEKNERPPLPASCQPALAHLIKRCWSENPSKRPDFSNIVAVLEKYDECVKEGLPLTSHASLTKTKKAILDHLKGCVTSISSPFSSSSVPVNA.

The Protein kinase domain maps to 86–359; that stretch reads LFIGNKFASG…GLPLTSHASL (274 aa). Residues 92–100 and lysine 113 contribute to the ATP site; that span reads FASGAHSRI. Residue aspartate 212 is the Proton acceptor of the active site.

Belongs to the protein kinase superfamily. Ser/Thr protein kinase family. In terms of assembly, interacts with DTX56. Binds to MPK4 and MPK12. Associates to CBC1 and CBC2. Post-translationally, autophosphorylated. Mainly localizes in guard cells. Expressed at low level in leaves, stems, roots and flowers.

Its subcellular location is the cell membrane. It catalyses the reaction L-seryl-[protein] + ATP = O-phospho-L-seryl-[protein] + ADP + H(+). The catalysed reaction is L-threonyl-[protein] + ATP = O-phospho-L-threonyl-[protein] + ADP + H(+). The enzyme catalyses L-tyrosyl-[protein] + ATP = O-phospho-L-tyrosyl-[protein] + ADP + H(+). Inhibited by MPK4 and MPK12. Its function is as follows. Serine/threonine/tyrosine kinase involved in the control of stomatal movement in response to CO(2). Functions as a major negative regulator of CO(2)-induced stomatal closing. Does not seem to be involved in stomatal closure in response to abscisic acid (ABA) or light. Involved in the control of red light-induced stomatal opening. Is epistatic to SRK2E/OST1 function during stomatal responses to red light and altered CO(2). Phosphorylates SRK2E/OST1 and GHR1 to prevents SRK2E/OST1- and GHR1-induced activation of SLAC1, thus preventing stomatal closure. Mediates the phosphorylation of CBC1 and CBC2. The protein is Serine/threonine/tyrosine-protein kinase HT1 of Arabidopsis thaliana (Mouse-ear cress).